Reading from the N-terminus, the 102-residue chain is Cytochrome c-553 (102 aa).

A signal peptide spans 1–23 (MKRILVVMSICAALAFGVSAAMA). Residues Cys33, Cys36, His37, and Met80 each contribute to the heme c site.

Binds 1 heme c group covalently per subunit.

The protein localises to the periplasm. Natural electron acceptor for a formate dehydrogenase. The protein is Cytochrome c-553 of Nitratidesulfovibrio vulgaris (strain DSM 19637 / Miyazaki F) (Desulfovibrio vulgaris).